Reading from the N-terminus, the 193-residue chain is Cilia- and flagella-associated protein 20 (193 aa).

This sequence belongs to the CFAP20 family. In terms of assembly, microtubule inner protein component of sperm flagellar doublet microtubules.

It localises to the nucleus. Its subcellular location is the cytoplasm. The protein localises to the cytoskeleton. It is found in the microtubule organizing center. The protein resides in the centrosome. It localises to the centriole. Its subcellular location is the cilium basal body. The protein localises to the cilium axoneme. It is found in the flagellum axoneme. Its function is as follows. Cilium- and flagellum-specific protein that plays a role in axonemal structure organization and motility. Microtubule inner protein (MIP) part of the dynein-decorated doublet microtubules (DMTs) in cilia axoneme, which is required for motile cilia beating. Involved in the regulation of the size and morphology of cilia. Required for axonemal microtubules polyglutamylation. This Homo sapiens (Human) protein is Cilia- and flagella-associated protein 20.